Here is a 318-residue protein sequence, read N- to C-terminus: Olfactory receptor 51E1 (318 aa).

The Extracellular portion of the chain corresponds to 1 to 31 (MMVDPNGNESSATYFILIGLPGLEEAQFWLA). Asn8 carries an N-linked (GlcNAc...) asparagine glycan. The chain crosses the membrane as a helical span at residues 32-52 (FPLCSLYLIAVLGNLTIIYIV). The Cytoplasmic portion of the chain corresponds to 53-60 (RTEHSLHE). A helical transmembrane segment spans residues 61-81 (PMYIFLCMLSGIDILISTSSM). Over 82–100 (PKMLAIFWFNSTTIQFDAC) the chain is Extracellular. The N-linked (GlcNAc...) asparagine glycan is linked to Asn91. An intrachain disulfide couples Cys100 to Cys182. The chain crosses the membrane as a helical span at residues 101-123 (LLQMFAIHSLSGMESTVLLAMAF). Residues 124–145 (DRYVAICHPLRHATVLTLPRVT) are Cytoplasmic-facing. Residues 146-166 (KIGVAAVVRGAALMAPLPVFI) form a helical membrane-spanning segment. Topologically, residues 167–198 (KQLPFCRSNILSHSYCLHQDVMKLACDDIRVN) are extracellular. Residues 199–219 (VVYGLIVIISAIGLDSLLISF) form a helical membrane-spanning segment. Topologically, residues 220-239 (SYLLILKTVLGLTREAQAKA) are cytoplasmic. Residues 240-260 (FGTCVSHVCAVFIFYVPFIGL) form a helical membrane-spanning segment. The Extracellular portion of the chain corresponds to 261 to 275 (SMVHRFSKRRDSPLP). A helical transmembrane segment spans residues 276–296 (VILANIYLLVPPVLNPIVYGV). Residues 297–318 (KTKEIRQRILRLFHVATHASEP) are Cytoplasmic-facing.

This sequence belongs to the G-protein coupled receptor 1 family. Highly expressed in prostate. Very low levels may be detected in some other tissues, such as placenta, skeletal muscle, heart, ovary and testis. Up-regulated in prostate cancers.

The protein resides in the cell membrane. Functionally, odorant receptor. The polypeptide is Olfactory receptor 51E1 (OR51E1) (Homo sapiens (Human)).